Reading from the N-terminus, the 520-residue chain is Pleckstrin homology domain-containing family A member 8 (520 aa).

In terms of domain architecture, PH spans 1–93; that stretch reads MEGVLYKWTN…WLVALGSAKA (93 aa). The residue at position 139 (T139) is a Phosphothreonine. Position 145 is a phosphoserine (S145). T153 carries the phosphothreonine modification. Polar residues predominate over residues 255–268; sequence ISSEENTDGNTTVQ. Residues 255–303 form a disordered region; the sequence is ISSEENTDGNTTVQGERMKEDGEENLESHDRDLAQPGSDSVCSPESPWE. Positions 270-287 are enriched in basic and acidic residues; it reads ERMKEDGEENLESHDRDL. Residues 311–520 form a glycolipid transfer protein homology domain region; that stretch reads TFFSTMNTSF…IHGLESDEVV (210 aa).

As to quaternary structure, homodimer. Interacts with ARF1; the interaction together with phosphatidylinositol 4-phosphate binding is required for FAPP2 GlcCer transfer ability.

The protein resides in the golgi apparatus. The protein localises to the trans-Golgi network membrane. Its subcellular location is the membrane. Cargo transport protein that is required for apical transport from the trans-Golgi network (TGN). Transports AQP2 from the trans-Golgi network (TGN) to sites of AQP2 phosphorylation. Mediates the non-vesicular transport of glucosylceramide (GlcCer) from the trans-Golgi network (TGN) to the plasma membrane and plays a pivotal role in the synthesis of complex glycosphingolipids. Binding of both phosphatidylinositol 4-phosphate (PIP) and ARF1 are essential for the GlcCer transfer ability. Also required for primary cilium formation, possibly by being involved in the transport of raft lipids to the apical membrane, and for membrane tubulation. This chain is Pleckstrin homology domain-containing family A member 8 (Plekha8), found in Rattus norvegicus (Rat).